The chain runs to 64 residues: MPKFKTHTGAGKRFRVTGTGKLMRRRANRNHLLEHKPSRRTRRLWNEVPVAAADTARMRRLLGR.

This sequence belongs to the bacterial ribosomal protein bL35 family.

In Acidothermus cellulolyticus (strain ATCC 43068 / DSM 8971 / 11B), this protein is Large ribosomal subunit protein bL35.